A 119-amino-acid polypeptide reads, in one-letter code: Large ribosomal subunit protein uL18 (119 aa).

The protein belongs to the universal ribosomal protein uL18 family. Part of the 50S ribosomal subunit; part of the 5S rRNA/L5/L18/L25 subcomplex. Contacts the 5S and 23S rRNAs.

In terms of biological role, this is one of the proteins that bind and probably mediate the attachment of the 5S RNA into the large ribosomal subunit, where it forms part of the central protuberance. The sequence is that of Large ribosomal subunit protein uL18 from Borrelia hermsii (strain HS1 / DAH).